The following is a 440-amino-acid chain: Putative epoxide hydrolase (440 aa).

The segment at 1-21 (MTKTLAEQPGEGAAPVSPSPS) is disordered. The tat-type signal signal peptide spans 1-49 (MTKTLAEQPGEGAAPVSPSPSRRALLHGAAGLGALAAGAAVAGPGLAFA).

It belongs to the peptidase S33 family. Predicted to be exported by the Tat system. The position of the signal peptide cleavage has not been experimentally proven.

The catalysed reaction is an epoxide + H2O = an ethanediol. This is Putative epoxide hydrolase from Stigmatella aurantiaca (strain DW4/3-1).